Reading from the N-terminus, the 101-residue chain is Small ribosomal subunit protein eS24 (101 aa).

This sequence belongs to the eukaryotic ribosomal protein eS24 family.

The polypeptide is Small ribosomal subunit protein eS24 (Methanosarcina acetivorans (strain ATCC 35395 / DSM 2834 / JCM 12185 / C2A)).